Here is a 707-residue protein sequence, read N- to C-terminus: Terpene cyclase/mutase atnI (707 aa).

Over residues 1-20 (MGQHIASSESSTNGHVSLET) the composition is skewed to polar residues. The interval 1 to 22 (MGQHIASSESSTNGHVSLETNG) is disordered. PFTB repeat units lie at residues 130–173 (AVEI…RLLG), 494–535 (LRDA…VGKT), 571–608 (TAQG…ETLA), and 620–661 (SRRG…VQTA).

This sequence belongs to the terpene cyclase/mutase family.

Its pathway is secondary metabolite biosynthesis; terpenoid biosynthesis. Its function is as follows. Terpene cyclase/mutase; part of the gene cluster that mediates the biosynthesis of the meroterpenoids arthripenoids. The pathway begins with the HR-PKS atnH that catalyzes two chain-extension steps to form a reduced triketide, which then primes the SAT domain in the NR-PKS atnG to initiate three more cycles of extension to give a linear hexaketide corresponding to the polyketide part of arthripenoids. The FAD-dependent monooxygenase atnJ then performs an oxidative decarboxylation at C11 of the atnH/atnG product, via an electrophilic aromatic hydroxylation with concomitant ipso-decarboxylation. The membrane-bound polyprenyl transferase atnF then introduces a farnesyl group before the FAD-dependent monooxygenase atnK functions as the first epoxidase on terminal C12'-C13' olefin, followed by a second epoxidation on C7'-C8' catalyzed by atnA. The terpene cyclase/mutase atnI then initiates the sequential tricyclic ring formation through protonation of the terminal epoxide and catalyzes the regioselective and stereoselective 6/6/6-tricyclic ring formation. The cytochrome P450 monooxygenase atnM is responsible for hydroxylating both C1' and C10'. The next steps may involve ketoreduction and acetyl transfer by the ketoreductase atnB and the acetyltransferase atnC, and lead to the production of arthripenoid B, the final biosynthetic product of the atn cluster. The hydroquinone moiety in arthripenoid B is prone to undergo spontaneous oxidation to afford a benzoquinone compound, a key intermediate for generating structure diversity. For instance, addition of a cysteine followed by ring contraction gives arthripenoid A, tautomerization gives the main product arthripenoid C, addition of a molecular of water or amine affords arthripenoid D or E, respectively, and loss of one water forms arthripenoid F. This chain is Terpene cyclase/mutase atnI, found in Arthrinium sp.